A 549-amino-acid polypeptide reads, in one-letter code: Glucose-6-phosphate isomerase (549 aa).

Glu-353 serves as the catalytic Proton donor. Residues His-384 and Lys-510 contribute to the active site. The tract at residues 523–549 (AEPPAAQSDSSTDALVRRYRSERGRTA) is disordered. Residues 537 to 549 (LVRRYRSERGRTA) are compositionally biased toward basic and acidic residues.

It belongs to the GPI family.

The protein localises to the cytoplasm. The enzyme catalyses alpha-D-glucose 6-phosphate = beta-D-fructose 6-phosphate. The protein operates within carbohydrate biosynthesis; gluconeogenesis. Its pathway is carbohydrate degradation; glycolysis; D-glyceraldehyde 3-phosphate and glycerone phosphate from D-glucose: step 2/4. Its function is as follows. Catalyzes the reversible isomerization of glucose-6-phosphate to fructose-6-phosphate. This chain is Glucose-6-phosphate isomerase, found in Mycolicibacterium gilvum (strain PYR-GCK) (Mycobacterium gilvum (strain PYR-GCK)).